We begin with the raw amino-acid sequence, 209 residues long: MGKFTVLNHPLIQHKLTIIRKKDTGTNEFRQIVGEIGGLMVYEMTRDLPLKNVEIETPIGKSTQKELAGKKLVIVPILRAGLGMVDGVLQMIPSAKVGHIGMYRDEETLKPHEYFFKMPPDIEERECIIVDPMLATGGSANMAIGALKKRGAKNIRLAVLVAAPEGVKAVQEANPDVDIYAAEEDEKLMDNGYIYPGLGDAGDRLFGTK.

Residues R79, R104, and 131-139 (DPMLATGGS) contribute to the 5-phospho-alpha-D-ribose 1-diphosphate site. Uracil is bound by residues I194 and 199–201 (GDA). D200 is a binding site for 5-phospho-alpha-D-ribose 1-diphosphate.

The protein belongs to the UPRTase family. It depends on Mg(2+) as a cofactor.

It carries out the reaction UMP + diphosphate = 5-phospho-alpha-D-ribose 1-diphosphate + uracil. The protein operates within pyrimidine metabolism; UMP biosynthesis via salvage pathway; UMP from uracil: step 1/1. Allosterically activated by GTP. Functionally, catalyzes the conversion of uracil and 5-phospho-alpha-D-ribose 1-diphosphate (PRPP) to UMP and diphosphate. This is Uracil phosphoribosyltransferase from Lactobacillus gasseri (strain ATCC 33323 / DSM 20243 / BCRC 14619 / CIP 102991 / JCM 1131 / KCTC 3163 / NCIMB 11718 / NCTC 13722 / AM63).